We begin with the raw amino-acid sequence, 727 residues long: Glycerol-3-phosphate dehydrogenase, mitochondrial (727 aa).

Residues 1 to 42 (MAFQKAVKGTILVGGGALATVLGLSPFAHYRRKQVSLAYVEA) constitute a mitochondrion transit peptide. 71-99 (DILVIGGGATGCGCALDAVTRGLKTALVE) lines the FAD pocket. Tyrosine 601 carries the phosphotyrosine modification. EF-hand domains lie at 623 to 658 (SDID…INVQ) and 659 to 694 (MDEN…VQKG). Ca(2+) contacts are provided by aspartate 672, asparagine 674, asparagine 676, glutamine 678, and glutamate 683.

It belongs to the FAD-dependent glycerol-3-phosphate dehydrogenase family. Requires FAD as cofactor.

Its subcellular location is the mitochondrion inner membrane. The catalysed reaction is a quinone + sn-glycerol 3-phosphate = dihydroxyacetone phosphate + a quinol. The protein operates within polyol metabolism; glycerol degradation via glycerol kinase pathway; glycerone phosphate from sn-glycerol 3-phosphate (anaerobic route): step 1/1. Calcium-binding enhance the activity of the enzyme. Functionally, calcium-responsive mitochondrial glycerol-3-phosphate dehydrogenase which seems to be a key component of the pancreatic beta-cell glucose-sensing device. The sequence is that of Glycerol-3-phosphate dehydrogenase, mitochondrial from Mus musculus (Mouse).